Reading from the N-terminus, the 194-residue chain is FMN-dependent NADH:quinone oxidoreductase (194 aa).

FMN is bound by residues serine 9, serine 15–serine 17, and methionine 85–phenylalanine 88.

This sequence belongs to the azoreductase type 1 family. In terms of assembly, homodimer. Requires FMN as cofactor.

The enzyme catalyses 2 a quinone + NADH + H(+) = 2 a 1,4-benzosemiquinone + NAD(+). The catalysed reaction is N,N-dimethyl-1,4-phenylenediamine + anthranilate + 2 NAD(+) = 2-(4-dimethylaminophenyl)diazenylbenzoate + 2 NADH + 2 H(+). In terms of biological role, quinone reductase that provides resistance to thiol-specific stress caused by electrophilic quinones. Its function is as follows. Also exhibits azoreductase activity. Catalyzes the reductive cleavage of the azo bond in aromatic azo compounds to the corresponding amines. The protein is FMN-dependent NADH:quinone oxidoreductase of Xanthomonas oryzae pv. oryzae (strain KACC10331 / KXO85).